A 407-amino-acid polypeptide reads, in one-letter code: Multifunctional CCA protein (407 aa).

Residues Gly8 and Arg11 each coordinate ATP. CTP is bound by residues Gly8 and Arg11. Mg(2+) is bound by residues Asp21 and Asp23. Residues Arg91, Arg137, and Arg140 each contribute to the ATP site. Positions 91, 137, and 140 each coordinate CTP. The HD domain maps to 228–329 (TGMHTLMVSQ…IKIFDKMDLW (102 aa)).

It belongs to the tRNA nucleotidyltransferase/poly(A) polymerase family. Bacterial CCA-adding enzyme type 1 subfamily. As to quaternary structure, monomer. Can also form homodimers and oligomers. Mg(2+) is required as a cofactor. The cofactor is Ni(2+).

The catalysed reaction is a tRNA precursor + 2 CTP + ATP = a tRNA with a 3' CCA end + 3 diphosphate. It carries out the reaction a tRNA with a 3' CCA end + 2 CTP + ATP = a tRNA with a 3' CCACCA end + 3 diphosphate. Functionally, catalyzes the addition and repair of the essential 3'-terminal CCA sequence in tRNAs without using a nucleic acid template. Adds these three nucleotides in the order of C, C, and A to the tRNA nucleotide-73, using CTP and ATP as substrates and producing inorganic pyrophosphate. tRNA 3'-terminal CCA addition is required both for tRNA processing and repair. Also involved in tRNA surveillance by mediating tandem CCA addition to generate a CCACCA at the 3' terminus of unstable tRNAs. While stable tRNAs receive only 3'-terminal CCA, unstable tRNAs are marked with CCACCA and rapidly degraded. The sequence is that of Multifunctional CCA protein from Aliivibrio salmonicida (strain LFI1238) (Vibrio salmonicida (strain LFI1238)).